Consider the following 413-residue polypeptide: Eukaryotic initiation factor 4A-14 (413 aa).

The short motif at 40 to 68 (DSFDAMGLQENLLRGIYAYGFEKPSAIQQ) is the Q motif element. Residues 71–241 (IVPFCKGLDV…RKFMSKPVRI (171 aa)) form the Helicase ATP-binding domain. Position 84–91 (84–91 (AQSGTGKT)) interacts with ATP. Residues 189–192 (DEAD) carry the DEAD box motif. The Helicase C-terminal domain maps to 252–413 (GIKQFYVNVD…ELPANVADLL (162 aa)).

This sequence belongs to the DEAD box helicase family. eIF4A subfamily. EIF4F is a multi-subunit complex, the composition of which varies with external and internal environmental conditions. It is composed of at least EIF4A, EIF4E and EIF4G.

The catalysed reaction is ATP + H2O = ADP + phosphate + H(+). ATP-dependent RNA helicase which is a subunit of the eIF4F complex involved in cap recognition and is required for mRNA binding to ribosome. In the current model of translation initiation, eIF4A unwinds RNA secondary structures in the 5'-UTR of mRNAs which is necessary to allow efficient binding of the small ribosomal subunit, and subsequent scanning for the initiator codon. This Nicotiana tabacum (Common tobacco) protein is Eukaryotic initiation factor 4A-14.